Here is a 383-residue protein sequence, read N- to C-terminus: Acetylornithine deacetylase (383 aa).

Zn(2+) is bound at residue histidine 80. The active site involves aspartate 82. Position 112 (aspartate 112) interacts with Zn(2+). The active site involves glutamate 144. Zn(2+)-binding residues include glutamate 145, glutamate 169, and histidine 355.

It belongs to the peptidase M20A family. ArgE subfamily. As to quaternary structure, homodimer. Requires Zn(2+) as cofactor. Co(2+) is required as a cofactor. Glutathione serves as cofactor.

It is found in the cytoplasm. The catalysed reaction is N(2)-acetyl-L-ornithine + H2O = L-ornithine + acetate. It functions in the pathway amino-acid biosynthesis; L-arginine biosynthesis; L-ornithine from N(2)-acetyl-L-ornithine (linear): step 1/1. In terms of biological role, catalyzes the hydrolysis of the amide bond of N(2)-acetylated L-amino acids. Cleaves the acetyl group from N-acetyl-L-ornithine to form L-ornithine, an intermediate in L-arginine biosynthesis pathway, and a branchpoint in the synthesis of polyamines. This chain is Acetylornithine deacetylase, found in Escherichia coli O9:H4 (strain HS).